Here is a 458-residue protein sequence, read N- to C-terminus: Phosphomethylpyrimidine synthase (458 aa).

Residues N80, M109, Y139, H175, 195-197 (SRG), 236-239 (DSLR), and E275 contribute to the substrate site. Residue H279 coordinates Zn(2+). A substrate-binding site is contributed by Y302. Position 343 (H343) interacts with Zn(2+). The [4Fe-4S] cluster site is built by C423, C426, and C431.

This sequence belongs to the ThiC family. The cofactor is [4Fe-4S] cluster.

The enzyme catalyses 5-amino-1-(5-phospho-beta-D-ribosyl)imidazole + S-adenosyl-L-methionine = 4-amino-2-methyl-5-(phosphooxymethyl)pyrimidine + CO + 5'-deoxyadenosine + formate + L-methionine + 3 H(+). The protein operates within cofactor biosynthesis; thiamine diphosphate biosynthesis. Functionally, catalyzes the synthesis of the hydroxymethylpyrimidine phosphate (HMP-P) moiety of thiamine from aminoimidazole ribotide (AIR) in a radical S-adenosyl-L-methionine (SAM)-dependent reaction. This Cyanothece sp. (strain PCC 7425 / ATCC 29141) protein is Phosphomethylpyrimidine synthase.